Reading from the N-terminus, the 200-residue chain is 3-isopropylmalate dehydratase small subunit (200 aa).

It belongs to the LeuD family. LeuD type 1 subfamily. As to quaternary structure, heterodimer of LeuC and LeuD.

It carries out the reaction (2R,3S)-3-isopropylmalate = (2S)-2-isopropylmalate. The protein operates within amino-acid biosynthesis; L-leucine biosynthesis; L-leucine from 3-methyl-2-oxobutanoate: step 2/4. In terms of biological role, catalyzes the isomerization between 2-isopropylmalate and 3-isopropylmalate, via the formation of 2-isopropylmaleate. This chain is 3-isopropylmalate dehydratase small subunit, found in Actinobacillus succinogenes (strain ATCC 55618 / DSM 22257 / CCUG 43843 / 130Z).